Reading from the N-terminus, the 292-residue chain is GTP cyclohydrolase FolE2 (292 aa).

It belongs to the GTP cyclohydrolase IV family.

It catalyses the reaction GTP + H2O = 7,8-dihydroneopterin 3'-triphosphate + formate + H(+). Its pathway is cofactor biosynthesis; 7,8-dihydroneopterin triphosphate biosynthesis; 7,8-dihydroneopterin triphosphate from GTP: step 1/1. In terms of biological role, converts GTP to 7,8-dihydroneopterin triphosphate. This chain is GTP cyclohydrolase FolE2, found in Staphylococcus saprophyticus subsp. saprophyticus (strain ATCC 15305 / DSM 20229 / NCIMB 8711 / NCTC 7292 / S-41).